Consider the following 420-residue polypeptide: UDP-N-acetylglucosamine 1-carboxyvinyltransferase (420 aa).

Lysine 22 to asparagine 23 contributes to the phosphoenolpyruvate binding site. UDP-N-acetyl-alpha-D-glucosamine is bound at residue arginine 92. Cysteine 116 serves as the catalytic Proton donor. Cysteine 116 is modified (2-(S-cysteinyl)pyruvic acid O-phosphothioketal). Residues arginine 121–glutamine 125, aspartate 304, and isoleucine 326 contribute to the UDP-N-acetyl-alpha-D-glucosamine site.

The protein belongs to the EPSP synthase family. MurA subfamily.

It localises to the cytoplasm. It catalyses the reaction phosphoenolpyruvate + UDP-N-acetyl-alpha-D-glucosamine = UDP-N-acetyl-3-O-(1-carboxyvinyl)-alpha-D-glucosamine + phosphate. It participates in cell wall biogenesis; peptidoglycan biosynthesis. Cell wall formation. Adds enolpyruvyl to UDP-N-acetylglucosamine. This is UDP-N-acetylglucosamine 1-carboxyvinyltransferase from Paraburkholderia xenovorans (strain LB400).